Reading from the N-terminus, the 357-residue chain is 3-isopropylmalate dehydrogenase, chloroplastic (357 aa).

Residues 1-29 constitute a chloroplast transit peptide; it reads MALQIAKRLLRCRADSVASSVRFFDRTFT. R120, R130, R151, and D238 together coordinate substrate. Residues D238, D262, and D266 each contribute to the Mg(2+) site. Residue 296–308 participates in NAD(+) binding; sequence GSAPDIAGKNLAN.

This sequence belongs to the isocitrate and isopropylmalate dehydrogenases family. In terms of assembly, homodimer. The cofactor is Mg(2+). It depends on Mn(2+) as a cofactor.

The protein localises to the plastid. It is found in the chloroplast. It catalyses the reaction (2R,3S)-3-isopropylmalate + NAD(+) = 4-methyl-2-oxopentanoate + CO2 + NADH. It functions in the pathway amino-acid biosynthesis; L-leucine biosynthesis; L-leucine from 3-methyl-2-oxobutanoate: step 3/4. Functionally, catalyzes the oxidation of 3-carboxy-2-hydroxy-4-methylpentanoate (3-isopropylmalate) to 3-carboxy-4-methyl-2-oxopentanoate. The product decarboxylates to 4-methyl-2 oxopentanoate. This is 3-isopropylmalate dehydrogenase, chloroplastic from Solanum tuberosum (Potato).